The chain runs to 279 residues: Phosphonoacetaldehyde hydrolase (279 aa).

The active-site Nucleophile is Asp20. Positions 20 and 22 each coordinate Mg(2+). The Schiff-base intermediate with substrate role is filled by Lys62. Residue Asp196 participates in Mg(2+) binding.

It belongs to the HAD-like hydrolase superfamily. PhnX family. Homodimer. Mg(2+) serves as cofactor.

It carries out the reaction phosphonoacetaldehyde + H2O = acetaldehyde + phosphate + H(+). Functionally, involved in phosphonate degradation. This chain is Phosphonoacetaldehyde hydrolase, found in Aeromonas hydrophila subsp. hydrophila (strain ATCC 7966 / DSM 30187 / BCRC 13018 / CCUG 14551 / JCM 1027 / KCTC 2358 / NCIMB 9240 / NCTC 8049).